The following is a 162-amino-acid chain: Putative ureidoglycolate lyase (162 aa).

It belongs to the ureidoglycolate lyase family. In terms of assembly, homodimer. Ni(2+) serves as cofactor.

It carries out the reaction (S)-ureidoglycolate = urea + glyoxylate. Its pathway is nitrogen metabolism; (S)-allantoin degradation. Catalyzes the catabolism of the allantoin degradation intermediate (S)-ureidoglycolate, generating urea and glyoxylate. Involved in the utilization of allantoin as nitrogen source. The sequence is that of Putative ureidoglycolate lyase from Agrobacterium fabrum (strain C58 / ATCC 33970) (Agrobacterium tumefaciens (strain C58)).